The sequence spans 754 residues: Deadenylation-dependent mRNA-decapping factor pdc2 (754 aa).

Residues 499-754 (LESIWKALYI…MGLDARQLSA (256 aa)) form an interaction with lsm1 region.

It belongs to the PAT1 family. Interacts with dcp2. Interacts with lsm1; via C-terminus.

Its subcellular location is the cytoplasm. It localises to the nucleus. The protein localises to the P-body. In terms of biological role, activator of decapping that functions as a general and active mechanism of translational repression and required for P-body formation. Stabilizes the 3' terminus of mRNAs and modulates the rates of mRNA-decapping that occur following deadenylation. Might be required for promoting the formation or the stabilization of the preinitiation translation complexes. Necessary for accurate chromosome transmission during cell division. Together with lsm1, recruits the deadenylase ccr4 to P-bodies. The sequence is that of Deadenylation-dependent mRNA-decapping factor pdc2 from Schizosaccharomyces pombe (strain 972 / ATCC 24843) (Fission yeast).